A 466-amino-acid polypeptide reads, in one-letter code: ATP-dependent protease ATPase subunit HslU (466 aa).

ATP-binding positions include Ile18, 60–65, Asp279, Glu344, and Arg416; that span reads GVGKTE.

This sequence belongs to the ClpX chaperone family. HslU subfamily. As to quaternary structure, a double ring-shaped homohexamer of HslV is capped on each side by a ring-shaped HslU homohexamer. The assembly of the HslU/HslV complex is dependent on binding of ATP.

It is found in the cytoplasm. Its function is as follows. ATPase subunit of a proteasome-like degradation complex; this subunit has chaperone activity. The binding of ATP and its subsequent hydrolysis by HslU are essential for unfolding of protein substrates subsequently hydrolyzed by HslV. HslU recognizes the N-terminal part of its protein substrates and unfolds these before they are guided to HslV for hydrolysis. The polypeptide is ATP-dependent protease ATPase subunit HslU (Syntrophomonas wolfei subsp. wolfei (strain DSM 2245B / Goettingen)).